A 205-amino-acid chain; its full sequence is Macrophage immunometabolism regulator (205 aa).

The disordered stretch occupies residues 1-40; sequence MEVDINGVNRTNNSVPSTAEGSSPSKPDPEKPRCSSTPCS. The segment covering 8 to 25 has biased composition (polar residues); sequence VNRTNNSVPSTAEGSSPS.

The protein belongs to the UNC119-binding protein family. Interacts with unc119 family proteins; interaction preferentially takes place when unc119 proteins are unliganded with myristoylated proteins.

It localises to the cytoplasm. The protein localises to the cell projection. The protein resides in the cilium. Functionally, may play a role in immune regulation through regulation of the macrophage function. May also play a role in trafficking of proteins via its interaction with unc119 family cargo adapters. May play a role in ciliary membrane localization. In Xenopus laevis (African clawed frog), this protein is Macrophage immunometabolism regulator (macir).